The sequence spans 456 residues: tRNA(Ile)-lysidine synthase (456 aa).

Position 28–33 (28–33 (SGGSDS)) interacts with ATP.

It belongs to the tRNA(Ile)-lysidine synthase family.

It is found in the cytoplasm. It catalyses the reaction cytidine(34) in tRNA(Ile2) + L-lysine + ATP = lysidine(34) in tRNA(Ile2) + AMP + diphosphate + H(+). Functionally, ligates lysine onto the cytidine present at position 34 of the AUA codon-specific tRNA(Ile) that contains the anticodon CAU, in an ATP-dependent manner. Cytidine is converted to lysidine, thus changing the amino acid specificity of the tRNA from methionine to isoleucine. This chain is tRNA(Ile)-lysidine synthase, found in Brucella anthropi (strain ATCC 49188 / DSM 6882 / CCUG 24695 / JCM 21032 / LMG 3331 / NBRC 15819 / NCTC 12168 / Alc 37) (Ochrobactrum anthropi).